The sequence spans 434 residues: Progestin and adipoQ receptor-like protein 1 (434 aa).

The Cytoplasmic portion of the chain corresponds to Met1–Thr201. 2 disordered regions span residues Leu74 to His103 and Glu118 to Val137. A helical membrane pass occupies residues Gly202–Leu222. Residues Thr223 to Lys234 are Extracellular-facing. A helical transmembrane segment spans residues Val235–His255. Residues Thr256–Tyr273 are Cytoplasmic-facing. A helical transmembrane segment spans residues Met274–Cys294. Over Arg295–Lys299 the chain is Extracellular. Residues Ile300 to Asp320 traverse the membrane as a helical segment. The Cytoplasmic portion of the chain corresponds to Lys321–Arg331. Residues Ala332 to Thr352 form a helical membrane-spanning segment. Topologically, residues Asp353 to Asn362 are extracellular. The chain crosses the membrane as a helical span at residues Ser363 to Thr383. Residues Arg384–Leu403 lie on the Cytoplasmic side of the membrane. A helical membrane pass occupies residues Phe404 to Phe424. Residues Ala425–Arg434 lie on the Extracellular side of the membrane.

It belongs to the ADIPOR family.

The protein resides in the membrane. Functionally, probable receptor, which may be involved in metabolic pathways that regulate lipid metabolism such as fatty acid oxidation. The protein is Progestin and adipoQ receptor-like protein 1 (paqr-1) of Caenorhabditis elegans.